The following is a 90-amino-acid chain: Acylphosphatase (90 aa).

The Acylphosphatase-like domain maps to 3 to 90 (NYKIIVFGTV…KTYNDFSVTY (88 aa)). Residues R18 and N36 contribute to the active site.

It belongs to the acylphosphatase family.

It catalyses the reaction an acyl phosphate + H2O = a carboxylate + phosphate + H(+). The polypeptide is Acylphosphatase (acyP) (Ligilactobacillus salivarius (strain UCC118) (Lactobacillus salivarius)).